A 413-amino-acid chain; its full sequence is Putative competence-damage inducible protein (413 aa).

This sequence belongs to the CinA family.

This Lacticaseibacillus casei (strain BL23) (Lactobacillus casei) protein is Putative competence-damage inducible protein.